The sequence spans 292 residues: Ribosomal protein L11 methyltransferase (292 aa).

Positions 144, 165, 187, and 229 each coordinate S-adenosyl-L-methionine.

Belongs to the methyltransferase superfamily. PrmA family.

The protein localises to the cytoplasm. It carries out the reaction L-lysyl-[protein] + 3 S-adenosyl-L-methionine = N(6),N(6),N(6)-trimethyl-L-lysyl-[protein] + 3 S-adenosyl-L-homocysteine + 3 H(+). Functionally, methylates ribosomal protein L11. The protein is Ribosomal protein L11 methyltransferase of Azotobacter vinelandii (strain DJ / ATCC BAA-1303).